The primary structure comprises 385 residues: Trans-enoyl reductase poxH (385 aa).

NADP(+) is bound at residue 64–67 (QPYS). Residue 156 to 163 (PDPAAPPI) coordinates substrate. NADP(+)-binding positions include 199-202 (STSV), 223-226 (SGTD), Tyr-241, and 289-290 (LG). Position 309-313 (309-313 (HMAPL)) interacts with substrate. 372–373 (KR) contributes to the NADP(+) binding site.

The protein belongs to the zinc-containing alcohol dehydrogenase family. Monomer.

It functions in the pathway secondary metabolite biosynthesis. Its function is as follows. Trans-enoyl reductase; part of the gene cluster that mediates the biosynthesis of oxaleimides, cytotoxic compounds containing an unusual disubstituted succinimide moiety. The first step of the pathway is provided by the HR-PKS poxF that serves in a new mode of collaborative biosynthesis with the PKS-NRPS poxE, by providing the olefin containing amino acid substrate via the synthesis of an ACP-bound dec-4-enoate. The cytochrome P450 monooxygenase poxM-catalyzed oxidation at the alpha-position creates the enzyme-bound 2-hydroxydec-4-enoyl-ACP thioester, which may be prone to spontaneous hydrolysis to yield 2-hydroxydec-4-enoic acid due to increased electrophilicity of the carbonyl. 2-hydroxydec-4-enoic acid can then be further oxidized by poxM to yield the alpha-ketoacid 2-oxodec-4-enoicacid, which is reductively aminated by the aminotransferase poxL to yield (S,E)-2-aminodec-4-enoic acid. The Hybrid PKS-NRPS synthetase poxE then performs condensation between the octaketide product of its PKS modules and the amino group of (S,E)-2-aminodec-4-enoic acid which is activated and incorporated by the adenylation domain. The resulting aminoacyl product can be cyclized by the Diels-Alderase PoxQ and reductively released by the reductive (R) domain of poxE to yield an aldehyde intermediate. The released aldehyde is then substrate for a Knoevenagel condensation by the hydrolyase poxO followed by an oxidation at the 5-position of the pyrrolidone ring. The presence of the olefin from the amino acid building block allows for migration of the substituted allyl group to occur. This allylic transposition reaction takes place in a conjugate addition, semipinacol-like fashion to yield a succinimide intermediate. Iterative two-electron oxidations of the C7 methyl of the succinimide intermediate to the carboxylic acid can be catalyzed by one of two remaining cytochrome P450 monooxygenasess poxC or poxD to yield oxaleimide A. Subsequent oxidation yields the maleimide scaffold oxaleimide I. Both oxaleimide A and oxaleimide I can undergo oxidative modifications in the decalin ring to yield the series of products oxaleimides B to H. This chain is Trans-enoyl reductase poxH, found in Penicillium oxalicum.